The primary structure comprises 400 residues: 3-hydroxybenzoate 6-hydroxylase (400 aa).

Belongs to the 3-hydroxybenzoate 6-hydroxylase family. As to quaternary structure, monomer. The cofactor is FAD.

The catalysed reaction is 3-hydroxybenzoate + NADH + O2 + H(+) = 2,5-dihydroxybenzoate + NAD(+) + H2O. Its function is as follows. Catalyzes the NAD- or NADP-dependent conversion of 3-hydroxybenzoate to gentisate. The affinity of the enzyme toward NAD is twice as high as for NADP. The sequence is that of 3-hydroxybenzoate 6-hydroxylase (nagX) from Polaromonas naphthalenivorans (strain CJ2).